We begin with the raw amino-acid sequence, 340 residues long: MDAASVSFGSGHDLSSQPRHDWTRSEAETLYNLPFADLIFQAQTLHRRHFDPNHVETANLLSIKTGGCPEDCGYCSQSAHYDSGVKATKLMDREAVIETARRARDAGASRFCMAAAWRNPKDRDLDRVCDMVSAVKELGLETCATLGMLTPDQARRLHDAGLDFYNHNVDTSPEFYGNIITTRTMQDRIDTLAHAREAGLKVCCGGIIGLGEQVGDRLGMLMLLANLPAHPESVPINMWNEVKSVPVNDTAERPDPIALVRMIAVARIMMPRSVVRLSAGRQYMTDELQALCFLAGANSIFIGDVLLTTKNPQTARDAALLDRLGIRSRLDDAKAAAPPH.

Residues 1-21 (MDAASVSFGSGHDLSSQPRHD) form a disordered region. Positions 53 to 272 (NHVETANLLS…IAVARIMMPR (220 aa)) constitute a Radical SAM core domain. Residues C68, C72, and C75 each contribute to the [4Fe-4S] cluster site. The [2Fe-2S] cluster site is built by C112, C143, C203, and R276.

Belongs to the radical SAM superfamily. Biotin synthase family. In terms of assembly, homodimer. [4Fe-4S] cluster serves as cofactor. Requires [2Fe-2S] cluster as cofactor.

The enzyme catalyses (4R,5S)-dethiobiotin + (sulfur carrier)-SH + 2 reduced [2Fe-2S]-[ferredoxin] + 2 S-adenosyl-L-methionine = (sulfur carrier)-H + biotin + 2 5'-deoxyadenosine + 2 L-methionine + 2 oxidized [2Fe-2S]-[ferredoxin]. It participates in cofactor biosynthesis; biotin biosynthesis; biotin from 7,8-diaminononanoate: step 2/2. Functionally, catalyzes the conversion of dethiobiotin (DTB) to biotin by the insertion of a sulfur atom into dethiobiotin via a radical-based mechanism. In Nitrobacter hamburgensis (strain DSM 10229 / NCIMB 13809 / X14), this protein is Biotin synthase.